Here is a 263-residue protein sequence, read N- to C-terminus: E3 ubiquitin-protein ligase SINA-like 8 (263 aa).

Residues 35 to 71 (CPICCEGLTCPIFQCENGHLACSSCCPKLRNKCPACP) form an RING-type; degenerate zinc finger. Residues 75–261 (ILESILVTCP…IKLSIVETSN (187 aa)) form an SBD region. The segment at 78-136 (SILVTCPNDMFGCTESFLYGKKSTHEEECIFSLCSCPSLDCEYSGRYEDLYDHYKLTHI) adopts an SIAH-type zinc-finger fold. Residues cysteine 83, cysteine 90, histidine 102, cysteine 106, cysteine 113, cysteine 118, histidine 130, and histidine 135 each contribute to the Zn(2+) site.

This sequence belongs to the SINA (Seven in absentia) family.

It catalyses the reaction S-ubiquitinyl-[E2 ubiquitin-conjugating enzyme]-L-cysteine + [acceptor protein]-L-lysine = [E2 ubiquitin-conjugating enzyme]-L-cysteine + N(6)-ubiquitinyl-[acceptor protein]-L-lysine.. The protein operates within protein modification; protein ubiquitination. Functionally, E3 ubiquitin-protein ligase that mediates ubiquitination and subsequent proteasomal degradation of target proteins. E3 ubiquitin ligases accept ubiquitin from an E2 ubiquitin-conjugating enzyme in the form of a thioester and then directly transfers the ubiquitin to targeted substrates. It probably triggers the ubiquitin-mediated degradation of different substrates. In Arabidopsis thaliana (Mouse-ear cress), this protein is E3 ubiquitin-protein ligase SINA-like 8.